The following is a 74-amino-acid chain: UPF0435 protein GK0418 (74 aa).

This sequence belongs to the UPF0435 family.

This is UPF0435 protein GK0418 from Geobacillus kaustophilus (strain HTA426).